A 455-amino-acid chain; its full sequence is 3-isopropylmalate dehydratase large subunit (455 aa).

[4Fe-4S] cluster-binding residues include Cys-336, Cys-396, and Cys-399.

Belongs to the aconitase/IPM isomerase family. LeuC type 1 subfamily. Heterodimer of LeuC and LeuD. The cofactor is [4Fe-4S] cluster.

The enzyme catalyses (2R,3S)-3-isopropylmalate = (2S)-2-isopropylmalate. It participates in amino-acid biosynthesis; L-leucine biosynthesis; L-leucine from 3-methyl-2-oxobutanoate: step 2/4. Its function is as follows. Catalyzes the isomerization between 2-isopropylmalate and 3-isopropylmalate, via the formation of 2-isopropylmaleate. This is 3-isopropylmalate dehydratase large subunit from Staphylococcus aureus (strain MRSA252).